We begin with the raw amino-acid sequence, 412 residues long: Serine hydroxymethyltransferase (412 aa).

Residues Leu-117 and 121-123 (GHL) each bind (6S)-5,6,7,8-tetrahydrofolate. An N6-(pyridoxal phosphate)lysine modification is found at Lys-226.

It belongs to the SHMT family. Homodimer. Requires pyridoxal 5'-phosphate as cofactor.

It localises to the cytoplasm. The enzyme catalyses (6R)-5,10-methylene-5,6,7,8-tetrahydrofolate + glycine + H2O = (6S)-5,6,7,8-tetrahydrofolate + L-serine. It functions in the pathway one-carbon metabolism; tetrahydrofolate interconversion. It participates in amino-acid biosynthesis; glycine biosynthesis; glycine from L-serine: step 1/1. In terms of biological role, catalyzes the reversible interconversion of serine and glycine with tetrahydrofolate (THF) serving as the one-carbon carrier. This reaction serves as the major source of one-carbon groups required for the biosynthesis of purines, thymidylate, methionine, and other important biomolecules. Also exhibits THF-independent aldolase activity toward beta-hydroxyamino acids, producing glycine and aldehydes, via a retro-aldol mechanism. This Symbiobacterium thermophilum (strain DSM 24528 / JCM 14929 / IAM 14863 / T) protein is Serine hydroxymethyltransferase.